The primary structure comprises 537 residues: Cytochrome P450 monooxygenase ltmQ (537 aa).

The chain crosses the membrane as a helical span at residues 10 to 30 (FPKLNFATIVISGATIIGIIF). Asn182, Asn188, and Asn310 each carry an N-linked (GlcNAc...) asparagine glycan. A heme-binding site is contributed by Cys476.

The protein belongs to the cytochrome P450 family. Heme serves as cofactor.

The protein localises to the membrane. It functions in the pathway secondary metabolite biosynthesis. Cytochrome P450 monooxygenase; part of the gene clusters that mediates the biosynthesis of lolitrems, indole-diterpene mycotoxins that are potent tremorgens in mammals, and are synthesized by clavicipitaceous fungal endophytes in association with their grass hosts. The geranylgeranyl diphosphate (GGPP) synthase ltmG is proposed to catalyze the first step in lolitrem biosynthesis. LtmG catalyzes a series of iterative condensations of isopentenyl diphosphate (IPP) with dimethylallyl diphosphate (DMAPP), geranyl diphosphate (GPP), and farnesyl diphosphate (FPP), to form GGPP. GGPP then condenses with indole-3-glycerol phosphate to form 3-geranylgeranylindole, an acyclic intermediate, to be incorporated into paxilline. Either ltmG or ltmC could be responsible for this step, as both are putative prenyl transferases. The FAD-dependent monooxygenase ltmM then catalyzes the epoxidation of the two terminal alkenes of the geranylgeranyl moiety, which is subsequently cyclized by ltmB, to paspaline. The cytochrome P450 monooxygenases ltmQ and ltmP can sequentially oxidize paspaline to terpendole E and terpendole F. Alternatively, ltmP converts paspaline to an intermediate which is oxidized by ltmQ to terpendole F. LtmF, ltmK, ltmE and ltmJ appear to be unique to the epichloe endophytes. The prenyltransferase ltmF is involved in the 27-hydroxyl-O-prenylation. The cytochrome P450 monooxygenase ltmK is required for the oxidative acetal ring formation. The multi-functional prenyltransferase ltmE is required for C20- and C21-prenylations of the indole ring of paspalanes and acts together with the cytochrome P450 monooxygenase ltmJ to yield lolitremanes by multiple oxidations and ring closures. The stereoisomer pairs of lolitriol and lolitrem N or lolitrem B and lolitrem F may be attributed to variations in the way in which ring closure can occur under the action of ltmJ. While the major product of this pathway is lolitrem B, the prenyl transferases and cytochrome P450 monooxygenases identified in this pathway have a remarkable versatility in their regio- and stereo-specificities to generate a diverse range of metabolites that are products of a metabolic grid rather than a linear pathway. The chain is Cytochrome P450 monooxygenase ltmQ from Epichloe festucae var. lolii (Neotyphodium lolii).